Consider the following 345-residue polypeptide: MIERVLAIETSCDDTSVAIVDRTGWVHSVVAASQDLDHEIYGGIVPEIAARNHSIALIPLIEEAFKKANMNWSDVQGIAVTNRPGLIGALIVGLVTAKSLSQAKHLPFLGVNHLEGHLLAPFLRDDKYAPPEDFGYPYVGLAISGGHTSLYQIKGLGDYRILGATKDDAAGECFDKFAKMAGLGFPGGVRVDQMAKAGNPQAFEFPRSMIHDDTFDMSFSGLKSSGQRMLEQLGPELVQERLPDLCASFQEAIVDVLIAKLDRAAKVFRSKRVILTGGVSANSRLRQRAQEWADKKGYTLVIPPLRYCTDNAAMIGYVGALRMARGEVSALDLGPSPQALASDFK.

Fe cation-binding residues include His-113 and His-117. Substrate contacts are provided by residues 142 to 146, Asp-175, Gly-188, Asp-192, and Asn-282; that span reads AISGG. A Fe cation-binding site is contributed by Asp-310.

The protein belongs to the KAE1 / TsaD family. It depends on Fe(2+) as a cofactor.

The protein localises to the cytoplasm. It carries out the reaction L-threonylcarbamoyladenylate + adenosine(37) in tRNA = N(6)-L-threonylcarbamoyladenosine(37) in tRNA + AMP + H(+). Required for the formation of a threonylcarbamoyl group on adenosine at position 37 (t(6)A37) in tRNAs that read codons beginning with adenine. Is involved in the transfer of the threonylcarbamoyl moiety of threonylcarbamoyl-AMP (TC-AMP) to the N6 group of A37, together with TsaE and TsaB. TsaD likely plays a direct catalytic role in this reaction. The sequence is that of tRNA N6-adenosine threonylcarbamoyltransferase from Bdellovibrio bacteriovorus (strain ATCC 15356 / DSM 50701 / NCIMB 9529 / HD100).